The following is a 659-amino-acid chain: Interferon-induced GTP-binding protein Mx1 (659 aa).

M1 carries the N-acetylmethionine modification. The interval 1 to 40 is disordered; sequence MVNSKGEITDSDPGSNHLLLNGLPDKAGKNQDTEPENSLC. The region spanning 65-338 is the Dynamin-type G domain; sequence DLALPAIAVI…LITHICKTLP (274 aa). The interval 75–82 is G1 motif; the sequence is GDQSSGKS. Position 75-82 (75-82) interacts with GTP; that stretch reads GDQSSGKS. A G2 motif region spans residues 100–102; it reads VTR. The tract at residues 176-179 is G3 motif; it reads DLPG. GTP is bound by residues 176 to 180 and 245 to 248; these read DLPGI and TKPD. The tract at residues 245–248 is G4 motif; the sequence is TKPD. The tract at residues 277-280 is G5 motif; sequence KCRG. Residues 339 to 364 are bundle signaling element (BSE); sequence LLENQIKENHEKITEELKKYGSDVPE. The middle domain stretch occupies residues 364–531; it reads EEEHEKMFFL…HFQMEQIVYC (168 aa). The stalk stretch occupies residues 365 to 629; that stretch reads EEHEKMFFLI…KDTYNWLLKE (265 aa). A critical for lipid-binding region spans residues 552–555; it reads KNKK. The GED domain occupies 571–659; sequence LSEIFEHLLA…ARRRLAKFPG (89 aa).

This sequence belongs to the TRAFAC class dynamin-like GTPase superfamily. Dynamin/Fzo/YdjA family. In terms of assembly, homooligomer. Oligomerizes into multimeric filamentous or ring-like structures by virtue of its stalk domain. Oligomerization is critical for GTPase activity, protein stability, and recognition of viral target structures. Interacts with TRPC1, TRPC3, TRPC4, TRPC5, TRPC6 and TRPC7. Interacts with HSPA5. Interacts with TUBB/TUBB5. Interacts with DDX39A and DDX39B. ISGylated.

The protein localises to the cytoplasm. The protein resides in the endoplasmic reticulum membrane. It is found in the perinuclear region. Its function is as follows. Interferon-induced dynamin-like GTPase with antiviral activity. This Phoca vitulina (Harbor seal) protein is Interferon-induced GTP-binding protein Mx1 (MX1).